Here is a 2006-residue protein sequence, read N- to C-terminus: E3 ubiquitin-protein ligase PRT6 (2006 aa).

Residues 119–189 (GVCGSVWGQN…PDGFCSNHKG (71 aa)) form a UBR-type zinc finger. Disordered stretches follow at residues 1167 to 1186 (LSSSMDDDDPRSEFETSDSV) and 1338 to 1380 (DHQP…AGSD). The span at 1338–1348 (DHQPHEAENCS) shows a compositional bias: basic and acidic residues. The span at 1349–1360 (EKNSVGGPSTLQ) shows a compositional bias: polar residues. Residues 1364–1377 (PDIRSRQTSRRPDA) show a composition bias toward basic and acidic residues. The RING-type; degenerate zinc-finger motif lies at 1395-1440 (CGHAVHQSCLERYLKSLKERSGRRTVFEGAHIVDLKKKEFLCPVCR).

Belongs to the E3 ubiquitin-protein ligase UBR1-like family.

The catalysed reaction is S-ubiquitinyl-[E2 ubiquitin-conjugating enzyme]-L-cysteine + [acceptor protein]-L-lysine = [E2 ubiquitin-conjugating enzyme]-L-cysteine + N(6)-ubiquitinyl-[acceptor protein]-L-lysine.. Its pathway is protein modification; protein ubiquitination. Its function is as follows. Ubiquitin protein ligase which is a component of the N-end rule pathway with arginine specificity, and functions with the arginyltransferases ATE1 and ATE2. Recognizes and binds to proteins bearing specific N-terminal residues that are destabilizing according to the N-end rule, leading to their ubiquitination and subsequent degradation. Does not participate in degradation of proteins with N-terminal Phe or Leu. The N-end rule pathway regulates seed after-ripening, seedling sugar sensitivity, seedling lipid breakdown, and abscisic acid (ABA) sensitivity of germination. The N-end rule pathway regulates various aspects of leaf and shoot development. Involved in the ubiquitination and subsequent degradation of RAP2-12, an activator of hypoxic gene expression. The ubiquitination occurs after the N-arginylation of RAP2-12 by ATE1 or ATE2 under aerobic conditions. The end-rule pathway plays a role in regulating the timing and amplitude of the immune response following infection with the bacterial pathogen Pseudomonas syringae pv tomato. Regulates the biosynthesis of plant-defense metabolites such as glucosinolates, and the biosynthesis and response to the phytohormone jasmonate (JA), which plays a key role in plant immunity. Controls the expression of specific defense-response genes, activates the synthesis pathway for the phytoalexin camalexin, and influences basal resistance to the hemibiotroph pathogen Pseudomonas syringae pv tomato. Coordinates the mobilization of seed storage reserves and regulates the abundance and activities of several proteases following seed germination. This Arabidopsis thaliana (Mouse-ear cress) protein is E3 ubiquitin-protein ligase PRT6.